Reading from the N-terminus, the 412-residue chain is MAATLLARACGLVRGAPWPWGWRRLHTVYQSVELPETHQMLRQTCRDFAEKELFPIAAQVDKEHRFPAAQVKKMGELGLMAMNVPEELSGAGLDYLAYSIAMEEISRGCASTGVIMSVNNSLYLGPILKFGTKEQKQQWVAPFTSGDKIGCFALSEPGNGSDAGAAATTARADGDSWVLSGTKAWITNAWEASAVVVFASTDRSLHNKGISAFLVPMPTPGLTLGKKEDKLGIRASSTANLIFEDRRIPKDSLLGEPGLGFKIAMQTLDTGRIGIASQALGIAQAALDCAVTYAENRSAFGAPLTKLQAIQFKLADMALALESARLLTWRAAMLKDNKKPFTKEAAMAKLAASEAATAITHQAMQILGGMGYVKEMPAERHYRDARITEIYEGTSEIQRLVVAGHLLKSYRS.

The transit peptide at 1–24 directs the protein to the mitochondrion; it reads MAATLLARACGLVRGAPWPWGWRR. Thr27 bears the Phosphothreonine mark. An N6-acetyllysine; alternate modification is found at Lys51. Lys51 carries the N6-succinyllysine; alternate modification. An N6-acetyllysine modification is found at Lys72. Position 129 is an N6-acetyllysine; alternate (Lys129). Lys129 carries the N6-succinyllysine; alternate modification. Residues 152–161 and 185–187 each bind FAD; these read FALSEPGNGS and WIT. Residue Ser161 coordinates substrate. N6-acetyllysine is present on Lys208. Residue Lys262 is modified to N6-acetyllysine; alternate. Lys262 carries the N6-succinyllysine; alternate modification. 269–272 provides a ligand contact to substrate; that stretch reads DTGR. Residue Arg297 participates in FAD binding. Lys306 carries the post-translational modification N6-acetyllysine; alternate. Lys306 carries the N6-succinyllysine; alternate modification. FAD contacts are provided by residues Gln308 and 365 to 369; that span reads QILGG. Glu392 serves as the catalytic Proton acceptor. Position 393 (Gly393) interacts with substrate. Position 394 to 396 (394 to 396) interacts with FAD; it reads TSE.

This sequence belongs to the acyl-CoA dehydrogenase family. As to quaternary structure, homotetramer. Requires FAD as cofactor.

It is found in the mitochondrion matrix. The enzyme catalyses a short-chain 2,3-saturated fatty acyl-CoA + oxidized [electron-transfer flavoprotein] + H(+) = a short-chain (2E)-enoyl-CoA + reduced [electron-transfer flavoprotein]. It carries out the reaction butanoyl-CoA + oxidized [electron-transfer flavoprotein] + H(+) = (2E)-butenoyl-CoA + reduced [electron-transfer flavoprotein]. It catalyses the reaction pentanoyl-CoA + oxidized [electron-transfer flavoprotein] + H(+) = (2E)-pentenoyl-CoA + reduced [electron-transfer flavoprotein]. The catalysed reaction is hexanoyl-CoA + oxidized [electron-transfer flavoprotein] + H(+) = (2E)-hexenoyl-CoA + reduced [electron-transfer flavoprotein]. It functions in the pathway lipid metabolism; mitochondrial fatty acid beta-oxidation. Its function is as follows. Short-chain specific acyl-CoA dehydrogenase is one of the acyl-CoA dehydrogenases that catalyze the first step of mitochondrial fatty acid beta-oxidation, an aerobic process breaking down fatty acids into acetyl-CoA and allowing the production of energy from fats. The first step of fatty acid beta-oxidation consists in the removal of one hydrogen from C-2 and C-3 of the straight-chain fatty acyl-CoA thioester, resulting in the formation of trans-2-enoyl-CoA. Among the different mitochondrial acyl-CoA dehydrogenases, short-chain specific acyl-CoA dehydrogenase acts specifically on acyl-CoAs with saturated 4 to 6 carbons long primary chains. The protein is Short-chain specific acyl-CoA dehydrogenase, mitochondrial (ACADS) of Bos taurus (Bovine).